A 188-amino-acid polypeptide reads, in one-letter code: uncharacterized protein (188 aa).

This is an uncharacterized protein from Homo sapiens (Human).